We begin with the raw amino-acid sequence, 285 residues long: Bifunctional protein FolD (285 aa).

NADP(+)-binding positions include 165 to 167 (GRG), Thr192, and Val233.

This sequence belongs to the tetrahydrofolate dehydrogenase/cyclohydrolase family. As to quaternary structure, homodimer.

It catalyses the reaction (6R)-5,10-methylene-5,6,7,8-tetrahydrofolate + NADP(+) = (6R)-5,10-methenyltetrahydrofolate + NADPH. The enzyme catalyses (6R)-5,10-methenyltetrahydrofolate + H2O = (6R)-10-formyltetrahydrofolate + H(+). The protein operates within one-carbon metabolism; tetrahydrofolate interconversion. In terms of biological role, catalyzes the oxidation of 5,10-methylenetetrahydrofolate to 5,10-methenyltetrahydrofolate and then the hydrolysis of 5,10-methenyltetrahydrofolate to 10-formyltetrahydrofolate. This is Bifunctional protein FolD from Mycobacterium sp. (strain MCS).